Consider the following 238-residue polypeptide: ATP synthase subunit a (238 aa).

5 consecutive transmembrane segments (helical) span residues 16–36 (LIWLSMPLWLLSSMVPMTVLF), 79–99 (GLFMMILMLNLSGNFPFFFPV), 103–123 (FVFGFSFALSIWTCLVLSSLL), 129–149 (GLMSLVPTGCPLILVPFMVVV), and 209–229 (VFGAAEVAIACIQCYIFCVLL).

Belongs to the ATPase A chain family. As to quaternary structure, F-type ATPases have 2 components, CF(1) - the catalytic core - and CF(0) - the membrane proton channel. CF(1) has five subunits: alpha(3), beta(3), gamma(1), delta(1), epsilon(1). CF(0) has three main subunits: a, b and c.

It is found in the mitochondrion inner membrane. In terms of biological role, mitochondrial membrane ATP synthase (F(1)F(0) ATP synthase or Complex V) produces ATP from ADP in the presence of a proton gradient across the membrane which is generated by electron transport complexes of the respiratory chain. F-type ATPases consist of two structural domains, F(1) - containing the extramembraneous catalytic core and F(0) - containing the membrane proton channel, linked together by a central stalk and a peripheral stalk. During catalysis, ATP synthesis in the catalytic domain of F(1) is coupled via a rotary mechanism of the central stalk subunits to proton translocation. Key component of the proton channel; it may play a direct role in the translocation of protons across the membrane. This chain is ATP synthase subunit a (ATP6), found in Mytilus edulis (Blue mussel).